Consider the following 612-residue polypeptide: MSASWADVADSEKAVSQSKPPYVPPHLRNRPSEPVAAPLPQNDHAGYGGQPAGSRWAPPSSGGGGASGGGYRNDGGRTGYGYGAGGGGGGGGGWNNRSGGWDRREREVNPFGDDAELEPVFTEQENTGINFDAYEDIPVETSGGDVPPPVNTFADIDLGDALNLNIRRCKYVRPTPVQRHAIPILLAERDLMACAQTGSGKTAAFCFPIISGIMKDQHVERPRGSRAVYPFAVILSPTRELACQIHDEAKKFSYQTGVKVVVAYGGTPIHQQLRELERGCDILVATPGRLNDLLERARVSMQMIRFLALDEADRMLDMGFEPQIRKIVEQMDMPPRGVRQTMLFSATFPSQIQRLAADFMSNYIFLAVGRVGSSTDLITQRVEFVQESDKRSHLMDLLHAQRETQDKQSLTLVFVETKRGADTLENWLCMNEFPATSIHGDRTQQEREVALRSFKTGRTPILVATDVAARGLDIPHVAHVVNFDLPNDIDDYVHRIGRTGRAGKSGIATAFFNENNAQLARSLAELMQEANQEVPEWLTRYASRASFGGGKKRSGGRFGGRDFRREGSYSRGGGGGGGGGGSDYYGGGGYGGGGYGGAPSGGYGAGVTSAWD.

Disordered regions lie at residues 1–70 (MSAS…SGGG) and 83–104 (GAGG…WDRR). Residue serine 2 is modified to N-acetylserine. 2 stretches are compositionally biased toward gly residues: residues 61–70 (SGGGGASGGG) and 83–94 (GAGGGGGGGGGW). The Q motif motif lies at 151-179 (NTFADIDLGDALNLNIRRCKYVRPTPVQR). Positions 182–366 (IPILLAERDL…ADFMSNYIFL (185 aa)) constitute a Helicase ATP-binding domain. Residue 195–202 (AQTGSGKT) coordinates ATP. The DEAD box signature appears at 310-313 (DEAD). Positions 377–542 (LITQRVEFVQ…EVPEWLTRYA (166 aa)) constitute a Helicase C-terminal domain. The interval 547–583 (FGGGKKRSGGRFGGRDFRREGSYSRGGGGGGGGGGSD) is disordered. Residues 559–568 (GGRDFRREGS) are compositionally biased toward basic and acidic residues. The span at 570–583 (SRGGGGGGGGGGSD) shows a compositional bias: gly residues.

Belongs to the DEAD box helicase family. DDX3/DED1 subfamily.

The enzyme catalyses ATP + H2O = ADP + phosphate + H(+). The sequence is that of DEAD-box ATP-dependent RNA helicase 11 (RH11) from Arabidopsis thaliana (Mouse-ear cress).